Here is a 494-residue protein sequence, read N- to C-terminus: Zinc metalloproteinase/disintegrin (494 aa).

The signal sequence occupies residues 1–20 (MIQVLLVTICLAVFPFQGSS). Positions 21–193 (KTLKSGNVND…KKASHLVATS (173 aa)) are excised as a propeptide. A Peptidase M12B domain is found at 201-396 (RYVQLVIVAD…HNPPCILNQA (196 aa)). Cystine bridges form between Cys-311-Cys-391, Cys-351-Cys-375, and Cys-353-Cys-358. Residue His-336 coordinates Zn(2+). Glu-337 is an active-site residue. Zn(2+)-binding residues include His-340 and His-346. Positions 410–431 (ELLQNSVNPCYDPVTCQPKEKE) are excised as a propeptide. The 62-residue stretch at 417-478 (NPCYDPVTCQ…DCPRNPYKGE (62 aa)) folds into the Disintegrin domain. Disulfide bonds link Cys-433–Cys-442, Cys-438–Cys-463, Cys-439–Cys-468, and Cys-451–Cys-470. The Cell attachment site signature appears at 455–457 (RGD). Residues 482–494 (MEWPAPAKGSVLM) constitute a propeptide that is removed on maturation.

This sequence belongs to the venom metalloproteinase (M12B) family. P-II subfamily. P-IIa sub-subfamily. Monomer (disintegrin). As to expression, expressed by the venom gland.

It localises to the secreted. Impairs hemostasis in the envenomed animal. Its function is as follows. Inhibits ADP-induced platelet aggregation (IC(50)=168 nM). Inhibits alpha-5/beta-1 (ITGA5/ITGB1) integrin and induces the expression of a ligand-induced binding site epitope on beta-1 integrin subunit. Has a direct chemotactic stimulus on human neutrophils in vitro. The sequence is that of Zinc metalloproteinase/disintegrin from Echis ocellatus (Ocellated saw-scaled viper).